The primary structure comprises 206 residues: uncharacterized protein (206 aa).

This is an uncharacterized protein from Methanocaldococcus jannaschii (strain ATCC 43067 / DSM 2661 / JAL-1 / JCM 10045 / NBRC 100440) (Methanococcus jannaschii).